Reading from the N-terminus, the 1442-residue chain is MVIILAMTNREKFKVLADQIKISNQLEQDILEQGELTRIDVSNKNRTWTFQISLPHFLSHEDYLLFTHAIEEEFKEIATVAIDFSIKDTNNQDEFALKYFGHCIDQTRLSPKVKGQLKQKKLIMSGNVLKVLVSNDIERNHFDKACNGSLVKAFRQCGFEIDKVVFETDSTNHDDDLASLEAHIQQEDEQSAREATEKLEKMKAEKAKQQDNNESTVEKCQIGKPIQIENIKPIESIIEEEFKVAIEGVIFDINLKELKSGRHIVELKVTDYTDSLVLKMFTRKNKDDLDHFKALSVGKWVRAQGRIEEDTFVRDLVMMMSDIEEIKKTPKQDKAEDKRVEFHLHTSMSQMDGIPNISAYVEQAAKWGHQALAVTDHNVVQAFPDAHNAAEKHGIKMIYGMEGMLVDDGVPIAYKPTDRNLKDATYVVFDVETTGLSNQYDKIIELAAVKVHNGEIIDKFERFSNPHERLSETIINLTHITDDMLTDAPEIEEVLTEFKEWVGDAIFVAHNASFDMGFIDTGYERLGFGPSTNGVIDTLELSRTINTEYGKHGLNFLAKKYGVELTQHHRAIYDTEATAYIFIKMVQQMKELGVNNHLEINKKLTNEDAYKRARPSHVTLIVQNQEGLKNLFKIVSASLVKYYYRTPRIPRSLLNEYREGILIGTACDEGELFTAVMQKDQSEVEKIAKFYDFIEVQPPALYQDLMDRELIRDNETLTQIYKRLIDAGKSANIPVIATGNAHYLYEHDAIARKILIASQPGNPLNRSTLPEAHFRTTDEMLDDFHFLGEEKAYEIVVTNTNELANKIEKVVPIKDKLFTPRMDGANEEIRELSYSNAKKLYGEDLPQIVIDRLEKELDSIIGNGFSVIYLISQRLVKKSLDDGYLVGSRGSVGSSFVATMTEITEVNPLPPHYICSHCKTSEFFDDGSVGSGFDLPDKKCPTCGNELIKEGQDIPFETFLGFKGDKVPDIDLNFSGEYQPNAHNYTKVLFGEDKVFRAGTIGTVAEKTAFGFVKGYLNDQGIHKRGAEIDRLVKGCTGVKRTTGQHPGGIIVVPDYMDIYDFTPIQFPADDQSAAWMTTHFDFHSIHDNVLKLDILGHDDPTMIRMLQDLSGIDPKTIPVDDKETMQIFSGPESLGVTEDEILCKTGTFGVPEFGTGFVRQMLEDTKPTTFSELVQISGLSHGTDVWLGNAQELIRQGICDLSSVIGCRDDIMVYLMYAGLEPSMAFKTMEFVRKGRGLTDEMVEAMKENNVPDWYLDSCRKIKYMFPKAHAAAYVLMAVRIAYFKVHHPLYYYAAYFTIRASDFDLITMIKDKTSIRNTVKDMYSRYMDLGKKEKDVLTVLEIMNEMAHRGFRLQPISLEKSQAFDFIIEGDTLIPPFISVPGLGENVAQRIVEAREEGPFLSKEDLNKKAGLSQKVIDYLDELGSLPDLPDKAQLSIFDM.

An Exonuclease domain is found at 426-582 (YVVFDVETTG…YDTEATAYIF (157 aa)).

Belongs to the DNA polymerase type-C family. PolC subfamily.

It is found in the cytoplasm. The catalysed reaction is DNA(n) + a 2'-deoxyribonucleoside 5'-triphosphate = DNA(n+1) + diphosphate. Its function is as follows. Required for replicative DNA synthesis. This DNA polymerase also exhibits 3' to 5' exonuclease activity. In Staphylococcus epidermidis (strain ATCC 12228 / FDA PCI 1200), this protein is DNA polymerase III PolC-type.